Consider the following 391-residue polypeptide: 3-ketoacyl-CoA thiolase (391 aa).

Cys95 serves as the catalytic Acyl-thioester intermediate. Catalysis depends on proton acceptor residues His347 and Cys377.

It belongs to the thiolase-like superfamily. Thiolase family. In terms of assembly, heterotetramer of two alpha chains (FadB) and two beta chains (FadA).

The protein resides in the cytoplasm. It catalyses the reaction an acyl-CoA + acetyl-CoA = a 3-oxoacyl-CoA + CoA. It functions in the pathway lipid metabolism; fatty acid beta-oxidation. Its function is as follows. Catalyzes the final step of fatty acid oxidation in which acetyl-CoA is released and the CoA ester of a fatty acid two carbons shorter is formed. This Pseudomonas savastanoi pv. phaseolicola (strain 1448A / Race 6) (Pseudomonas syringae pv. phaseolicola (strain 1448A / Race 6)) protein is 3-ketoacyl-CoA thiolase.